Reading from the N-terminus, the 289-residue chain is Ribosomal RNA small subunit methyltransferase A (289 aa).

Residues asparagine 21, leucine 23, glycine 48, glutamate 69, aspartate 94, and asparagine 120 each coordinate S-adenosyl-L-methionine.

This sequence belongs to the class I-like SAM-binding methyltransferase superfamily. rRNA adenine N(6)-methyltransferase family. RsmA subfamily.

It is found in the cytoplasm. The catalysed reaction is adenosine(1518)/adenosine(1519) in 16S rRNA + 4 S-adenosyl-L-methionine = N(6)-dimethyladenosine(1518)/N(6)-dimethyladenosine(1519) in 16S rRNA + 4 S-adenosyl-L-homocysteine + 4 H(+). In terms of biological role, specifically dimethylates two adjacent adenosines (A1518 and A1519) in the loop of a conserved hairpin near the 3'-end of 16S rRNA in the 30S particle. May play a critical role in biogenesis of 30S subunits. The polypeptide is Ribosomal RNA small subunit methyltransferase A (Actinobacillus pleuropneumoniae serotype 5b (strain L20)).